A 126-amino-acid chain; its full sequence is MIRTMLQGKLHRVKVTHADLHYEGSCAIDQDFLDAAGILENEAIDIWNVTNGKRFSTYAIAAERGSRIISVNGAAAHCASVGDIVIIASFVNMPDEEARTWRPNVAYFEGDNEMKRTAKAIPVQVA.

The Schiff-base intermediate with substrate; via pyruvic acid role is filled by Ser-25. At Ser-25 the chain carries Pyruvic acid (Ser). Position 57 (Thr-57) interacts with substrate. Catalysis depends on Tyr-58, which acts as the Proton donor. Position 73-75 (73-75 (GAA)) interacts with substrate.

The protein belongs to the PanD family. Heterooctamer of four alpha and four beta subunits. Pyruvate serves as cofactor. Is synthesized initially as an inactive proenzyme, which is activated by self-cleavage at a specific serine bond to produce a beta-subunit with a hydroxyl group at its C-terminus and an alpha-subunit with a pyruvoyl group at its N-terminus.

It is found in the cytoplasm. The enzyme catalyses L-aspartate + H(+) = beta-alanine + CO2. The protein operates within cofactor biosynthesis; (R)-pantothenate biosynthesis; beta-alanine from L-aspartate: step 1/1. Its function is as follows. Catalyzes the pyruvoyl-dependent decarboxylation of aspartate to produce beta-alanine. In Escherichia coli O6:K15:H31 (strain 536 / UPEC), this protein is Aspartate 1-decarboxylase.